The sequence spans 266 residues: Beta-lactamase OXA-20 (266 aa).

Positions 1–21 are cleaved as a signal peptide; that stretch reads MIIRFLALLFSAVVLVSLGHA. Residue serine 72 is the Acyl-ester intermediate of the active site. N6-carboxylysine is present on lysine 75. Position 210 to 212 (210 to 212) interacts with substrate; sequence KTG.

The protein belongs to the class-D beta-lactamase family.

It carries out the reaction a beta-lactam + H2O = a substituted beta-amino acid. Its activity is regulated as follows. Inhibited by clavulanic acid. This is an oxacillin-hydrolyzing beta-lactamase. In Pseudomonas aeruginosa, this protein is Beta-lactamase OXA-20 (bla).